The sequence spans 182 residues: Aralkylamine dehydrogenase light chain (182 aa).

A signal peptide (tat-type signal) is located at residues 1-47 (MRWLDKFGESLSRSVAHKTSRRSVLRSVGKLMVGSAFVLPVLPVARA). Cystine bridges form between Cys-75–Cys-140, Cys-81–Cys-113, Cys-88–Cys-171, Cys-90–Cys-138, Cys-91–Cys-135, Cys-98–Cys-129, and Cys-130–Cys-161. Substrate is bound at residue Asp-84. The active-site Tryptophylquinone 6'-substrate hemiaminal intermediate is the Trp-109. Trp-109 bears the Tryptophylquinone mark. The tryptophan tryptophylquinone (Trp-Trp) cross-link spans 109–160 (WIGTCHNPHDGKDYLISYHDCCGKTACGRCQCNTQTRERPGYEFFLHNDVNW). The Proton acceptor role is filled by Asp-128. 156–158 (NDV) provides a ligand contact to substrate.

It belongs to the aromatic amine dehydrogenase light chain family. In terms of assembly, heterotetramer of two light and two heavy chains. Binds two azurin molecules per heterotetramer. Tryptophan tryptophylquinone residue is required as a cofactor. Post-translationally, tryptophan tryptophylquinone (TTQ) is formed by oxidation of the indole ring of a tryptophan to form tryptophylquinone followed by covalent cross-linking with another tryptophan residue. In terms of processing, predicted to be exported by the Tat system. The position of the signal peptide cleavage has been experimentally proven.

The protein resides in the periplasm. The catalysed reaction is an aralkylamine + 2 oxidized [azurin] + H2O = an aromatic aldehyde + 2 reduced [azurin] + NH4(+) + 2 H(+). Irreversibly inhibited by phenylhydrazine, hydroxylamine, semicarbazide, hydrazine and aminoguanidine. Reversibly inhibited by isonicotinic acid hydrazide (isoniazid) and isonicotinic acid 2-isopropyl hydrazide (iproniazid). In terms of biological role, oxidizes primary aromatic amines and, more slowly, some long-chain aliphatic amines, but not methylamine or ethylamine. Uses azurin as an electron acceptor to transfer electrons from the reduced tryptophylquinone cofactor. In Alcaligenes faecalis, this protein is Aralkylamine dehydrogenase light chain.